The following is a 138-amino-acid chain: Putative pre-16S rRNA nuclease (138 aa).

This sequence belongs to the YqgF nuclease family.

The protein localises to the cytoplasm. Functionally, could be a nuclease involved in processing of the 5'-end of pre-16S rRNA. This is Putative pre-16S rRNA nuclease from Helicobacter hepaticus (strain ATCC 51449 / 3B1).